A 584-amino-acid polypeptide reads, in one-letter code: UvrABC system protein C (584 aa).

Positions 12–89 constitute a GIY-YIG domain; that stretch reads NKPGCYLFFN…IKKYHPKYNV (78 aa). The UVR domain occupies 194–229; that stretch reads NQVKQTLVKQMQKASDNLQFEQAQRIKDQITSLDFI.

The protein belongs to the UvrC family. In terms of assembly, interacts with UvrB in an incision complex.

The protein localises to the cytoplasm. The UvrABC repair system catalyzes the recognition and processing of DNA lesions. UvrC both incises the 5' and 3' sides of the lesion. The N-terminal half is responsible for the 3' incision and the C-terminal half is responsible for the 5' incision. This Mycoplasma mycoides subsp. mycoides SC (strain CCUG 32753 / NCTC 10114 / PG1) protein is UvrABC system protein C.